Here is a 904-residue protein sequence, read N- to C-terminus: Protein translocase subunit SecA (904 aa).

ATP contacts are provided by residues glutamine 89, 107-111 (GEGKT), and aspartate 502. Positions 886, 888, 897, and 898 each coordinate Zn(2+).

This sequence belongs to the SecA family. In terms of assembly, monomer and homodimer. Part of the essential Sec protein translocation apparatus which comprises SecA, SecYEG and auxiliary proteins SecDF-YajC and YidC. It depends on Zn(2+) as a cofactor.

It localises to the cell inner membrane. The protein localises to the cytoplasm. It carries out the reaction ATP + H2O + cellular proteinSide 1 = ADP + phosphate + cellular proteinSide 2.. In terms of biological role, part of the Sec protein translocase complex. Interacts with the SecYEG preprotein conducting channel. Has a central role in coupling the hydrolysis of ATP to the transfer of proteins into and across the cell membrane, serving both as a receptor for the preprotein-SecB complex and as an ATP-driven molecular motor driving the stepwise translocation of polypeptide chains across the membrane. This chain is Protein translocase subunit SecA, found in Rhizobium etli (strain CIAT 652).